Consider the following 321-residue polypeptide: Fibronectin type III domain-containing protein 8 (321 aa).

The 103-residue stretch at 175 to 277 folds into the Fibronectin type-III domain; the sequence is VPEAPFVCEH…KPYKFATVAT (103 aa).

The polypeptide is Fibronectin type III domain-containing protein 8 (FNDC8) (Bos taurus (Bovine)).